Consider the following 183-residue polypeptide: Probable chemoreceptor glutamine deamidase CheD (183 aa).

The protein belongs to the CheD family.

It carries out the reaction L-glutaminyl-[protein] + H2O = L-glutamyl-[protein] + NH4(+). Its function is as follows. Probably deamidates glutamine residues to glutamate on methyl-accepting chemotaxis receptors (MCPs), playing an important role in chemotaxis. The protein is Probable chemoreceptor glutamine deamidase CheD of Rhizobium meliloti (strain 1021) (Ensifer meliloti).